We begin with the raw amino-acid sequence, 109 residues long: Urease subunit gamma (109 aa).

Belongs to the urease gamma subunit family. In terms of assembly, heterotrimer of UreA (gamma), UreB (beta) and UreC (alpha) subunits. Three heterotrimers associate to form the active enzyme.

The protein localises to the cytoplasm. It catalyses the reaction urea + 2 H2O + H(+) = hydrogencarbonate + 2 NH4(+). It functions in the pathway nitrogen metabolism; urea degradation; CO(2) and NH(3) from urea (urease route): step 1/1. The polypeptide is Urease subunit gamma (Natronomonas pharaonis (strain ATCC 35678 / DSM 2160 / CIP 103997 / JCM 8858 / NBRC 14720 / NCIMB 2260 / Gabara) (Halobacterium pharaonis)).